Here is a 296-residue protein sequence, read N- to C-terminus: Bifunctional protein FolD (296 aa).

NADP(+)-binding positions include 166-168, Ser-195, and Thr-236; that span reads GRS.

This sequence belongs to the tetrahydrofolate dehydrogenase/cyclohydrolase family. As to quaternary structure, homodimer.

The enzyme catalyses (6R)-5,10-methylene-5,6,7,8-tetrahydrofolate + NADP(+) = (6R)-5,10-methenyltetrahydrofolate + NADPH. It carries out the reaction (6R)-5,10-methenyltetrahydrofolate + H2O = (6R)-10-formyltetrahydrofolate + H(+). The protein operates within one-carbon metabolism; tetrahydrofolate interconversion. Catalyzes the oxidation of 5,10-methylenetetrahydrofolate to 5,10-methenyltetrahydrofolate and then the hydrolysis of 5,10-methenyltetrahydrofolate to 10-formyltetrahydrofolate. The sequence is that of Bifunctional protein FolD from Dehalococcoides mccartyi (strain ATCC BAA-2100 / JCM 16839 / KCTC 5957 / BAV1).